A 70-amino-acid polypeptide reads, in one-letter code: Large ribosomal subunit protein bL31 (70 aa).

Residue Lys-8 is modified to N6-acetyllysine. Positions 16, 18, 37, and 40 each coordinate Zn(2+).

Belongs to the bacterial ribosomal protein bL31 family. Type A subfamily. In terms of assembly, part of the 50S ribosomal subunit. Zn(2+) serves as cofactor.

Functionally, binds the 23S rRNA. The sequence is that of Large ribosomal subunit protein bL31 from Shigella flexneri.